A 355-amino-acid chain; its full sequence is Peptide chain release factor 1 (355 aa).

Q231 bears the N5-methylglutamine mark. A disordered region spans residues 283 to 303; it reads LAKESEARKSQVGSGDRSERI.

It belongs to the prokaryotic/mitochondrial release factor family. Post-translationally, methylated by PrmC. Methylation increases the termination efficiency of RF1.

It localises to the cytoplasm. Its function is as follows. Peptide chain release factor 1 directs the termination of translation in response to the peptide chain termination codons UAG and UAA. The sequence is that of Peptide chain release factor 1 from Campylobacter lari (strain RM2100 / D67 / ATCC BAA-1060).